A 121-amino-acid polypeptide reads, in one-letter code: Large ribosomal subunit protein uL22 (121 aa).

The protein belongs to the universal ribosomal protein uL22 family. Part of the 50S ribosomal subunit.

In terms of biological role, this protein binds specifically to 23S rRNA; its binding is stimulated by other ribosomal proteins, e.g. L4, L17, and L20. It is important during the early stages of 50S assembly. It makes multiple contacts with different domains of the 23S rRNA in the assembled 50S subunit and ribosome. Its function is as follows. The globular domain of the protein is located near the polypeptide exit tunnel on the outside of the subunit, while an extended beta-hairpin is found that lines the wall of the exit tunnel in the center of the 70S ribosome. The polypeptide is Large ribosomal subunit protein uL22 (Beutenbergia cavernae (strain ATCC BAA-8 / DSM 12333 / CCUG 43141 / JCM 11478 / NBRC 16432 / NCIMB 13614 / HKI 0122)).